Reading from the N-terminus, the 458-residue chain is F-box/LRR-repeat protein At5g02910 (458 aa).

In terms of domain architecture, F-box spans Met10–Asp56. LRR repeat units follow at residues Cys57 to Thr84, Leu86 to Ser112, Lys133 to Ser161, Asn162 to Tyr187, Cys226 to Ile251, Thr260 to Gly285, Lys325 to Asp353, and Glu389 to Leu414.

This is F-box/LRR-repeat protein At5g02910 from Arabidopsis thaliana (Mouse-ear cress).